A 158-amino-acid chain; its full sequence is Anaerobic nitrite reductase AHB2 (158 aa).

The Globin domain occupies 5 to 154; that stretch reads GFTEKQEALV…LALAIKTEMK (150 aa). The Homodimerization motif lies at 38 to 42; that stretch reads EIAPA. Residues serine 48, lysine 62, histidine 66, and histidine 101 each coordinate heme b. The Homodimerization motif lies at 108-120; sequence DPHFEVVKEALLR.

This sequence belongs to the plant globin family. Unable to dimerize. It depends on heme b as a cofactor. As to expression, expressed in rosette leaves but not in roots.

The protein localises to the cytoplasm. It is found in the nucleus. It carries out the reaction Fe(III)-heme b-[protein] + nitric oxide + H2O = Fe(II)-heme b-[protein] + nitrite + 2 H(+). Phytoglobin that reduces nitrite to nitric oxide (NO) under anoxic conditions (e.g. during flooding or in waterlogged soil). May not function as an oxygen storage or transport protein. Has an unusually high affinity for O(2) through an hexacoordinate heme iron because of a very low dissociation constant. The protein is Anaerobic nitrite reductase AHB2 of Arabidopsis thaliana (Mouse-ear cress).